A 76-amino-acid chain; its full sequence is Brevinin-2ISa (76 aa).

The N-terminal stretch at 1 to 22 is a signal peptide; that stretch reads MFNMKKSLLLLFFLGTISLSLC. Residues 23–41 constitute a propeptide, removed in mature form; sequence EEERDADEDDGVEMTEEEV. Cys-70 and Cys-76 are joined by a disulfide.

As to expression, expressed by the skin glands.

The protein localises to the secreted. Its function is as follows. Has antimicrobial activity against Gram-negative bacterium E.coli ATCC 8739 (MIC=50 ug), against Gram positive bacteria S.aureus ATCC 6538 (MIC=12.5 ug), methicillin-resistant S.aureus ATCC 43300 (MIC=100 ug) and B.subtilis ATCC 6633 (MIC=12.5 ug). Has no activity against fungus C.albicans ATCC 90028. The protein is Brevinin-2ISa of Odorrana ishikawae (Ishikawa's frog).